Here is a 97-residue protein sequence, read N- to C-terminus: Aspartyl/glutamyl-tRNA(Asn/Gln) amidotransferase subunit C (97 aa).

It belongs to the GatC family. As to quaternary structure, heterotrimer of A, B and C subunits.

The catalysed reaction is L-glutamyl-tRNA(Gln) + L-glutamine + ATP + H2O = L-glutaminyl-tRNA(Gln) + L-glutamate + ADP + phosphate + H(+). It catalyses the reaction L-aspartyl-tRNA(Asn) + L-glutamine + ATP + H2O = L-asparaginyl-tRNA(Asn) + L-glutamate + ADP + phosphate + 2 H(+). In terms of biological role, allows the formation of correctly charged Asn-tRNA(Asn) or Gln-tRNA(Gln) through the transamidation of misacylated Asp-tRNA(Asn) or Glu-tRNA(Gln) in organisms which lack either or both of asparaginyl-tRNA or glutaminyl-tRNA synthetases. The reaction takes place in the presence of glutamine and ATP through an activated phospho-Asp-tRNA(Asn) or phospho-Glu-tRNA(Gln). This chain is Aspartyl/glutamyl-tRNA(Asn/Gln) amidotransferase subunit C, found in Synechococcus sp. (strain JA-2-3B'a(2-13)) (Cyanobacteria bacterium Yellowstone B-Prime).